A 455-amino-acid chain; its full sequence is MDLAFSTEENIAAIASAVAPGQGAIAIVKVSGASAKEVVKNVVRTPSNKIWSSHKILYGHVIDKSTKKNIDEVLILIMDGPRSFTGEDVVEIHCHGGLIVVQQVLDAILKQPKTRRAFPGEFSQRAVLNGRLDITQAEAINDLIHARSQKAAQLAIAGIDGDITNKINYLREKLLDQLSEIEARIDFEEDLPKLNSKKLLTDLMLIRAELKQLINDAKQGSLIRNGLKVALVGLPNVGKSSILNLLSKHERAIVTDLPGTTRDLLESEIILEGVPITLIDTAGIRETNNEIEKIGVSLSQKTLFTADIVVLIFDLSKGWNKNDQNLLEKIPKGTPTLIIGNKADLKSQSTNIQPHATMTAITGEGEKELIQELLKLAGANELEGIEVALNQRQLDLVKVAVNALDQIEKVAAESLAWDFWTIDLREAIYKLGELTGEEVTEALLDRIFSRFCIGK.

(6S)-5-formyl-5,6,7,8-tetrahydrofolate-binding residues include K29, E91, and R131. Residues G226–G378 form the TrmE-type G domain. N236 is a binding site for K(+). Residues N236–S241, T255–T261, D280–G283, and N341–D344 each bind GTP. S240 is a Mg(2+) binding site. K(+) contacts are provided by T255, L257, and T260. T261 serves as a coordination point for Mg(2+). K455 contacts (6S)-5-formyl-5,6,7,8-tetrahydrofolate.

The protein belongs to the TRAFAC class TrmE-Era-EngA-EngB-Septin-like GTPase superfamily. TrmE GTPase family. As to quaternary structure, homodimer. Heterotetramer of two MnmE and two MnmG subunits. K(+) is required as a cofactor.

Its subcellular location is the cytoplasm. Its function is as follows. Exhibits a very high intrinsic GTPase hydrolysis rate. Involved in the addition of a carboxymethylaminomethyl (cmnm) group at the wobble position (U34) of certain tRNAs, forming tRNA-cmnm(5)s(2)U34. In Prochlorococcus marinus (strain SARG / CCMP1375 / SS120), this protein is tRNA modification GTPase MnmE.